A 170-amino-acid chain; its full sequence is MNKILGIDPLKKFIFGISAFVLLFWQLNVGAANATALREVDRTVNLNETETVVLSDQQVAKGERIFINTCSTCHNSGRTKSNPNVTLSLVDLEGAEPRRDNILAMVDYLKNPTSYDGELDLSQLHPNTVRADIWSSMRNLNEEDLQNVSGYVLVQAQVRGVAWGGGKTVN.

Residues 1–34 (MNKILGIDPLKKFIFGISAFVLLFWQLNVGAANA) form the signal peptide. Heme c-binding residues include cysteine 70, cysteine 73, histidine 74, and histidine 125.

This sequence belongs to the cytochrome c family. PsbV subfamily. In terms of assembly, PSII is composed of 1 copy each of membrane proteins PsbA, PsbB, PsbC, PsbD, PsbE, PsbF, PsbH, PsbI, PsbJ, PsbK, PsbL, PsbM, PsbT, PsbX, PsbY, PsbZ, Psb30/Ycf12, peripheral proteins PsbO, CyanoQ (PsbQ), PsbU, PsbV and a large number of cofactors. It forms dimeric complexes. Heme c serves as cofactor.

It localises to the cellular thylakoid membrane. Functionally, one of the extrinsic, lumenal subunits of photosystem II (PSII). PSII is a light-driven water plastoquinone oxidoreductase, using light energy to abstract electrons from H(2)O, generating a proton gradient subsequently used for ATP formation. The extrinsic proteins stabilize the structure of photosystem II oxygen-evolving complex (OEC), the ion environment of oxygen evolution and protect the OEC against heat-induced inactivation. Low-potential cytochrome c that plays a role in the OEC of PSII. The polypeptide is Photosystem II extrinsic protein V (Picosynechococcus sp. (strain ATCC 27264 / PCC 7002 / PR-6) (Agmenellum quadruplicatum)).